The primary structure comprises 1187 residues: DNA-directed RNA polymerase subunit beta (1187 aa).

The protein belongs to the RNA polymerase beta chain family. As to quaternary structure, the RNAP catalytic core consists of 2 alpha, 1 beta, 1 beta' and 1 omega subunit. When a sigma factor is associated with the core the holoenzyme is formed, which can initiate transcription.

It catalyses the reaction RNA(n) + a ribonucleoside 5'-triphosphate = RNA(n+1) + diphosphate. DNA-dependent RNA polymerase catalyzes the transcription of DNA into RNA using the four ribonucleoside triphosphates as substrates. This is DNA-directed RNA polymerase subunit beta from Petrotoga mobilis (strain DSM 10674 / SJ95).